Reading from the N-terminus, the 302-residue chain is Probable alpha-L-glutamate ligase (302 aa).

Positions 104 to 287 constitute an ATP-grasp domain; sequence MQLLSRKGIG…IAGMVFEFLE (184 aa). ATP-binding positions include Lys-141, 178–179, Asp-187, and 211–213; these read EF and RSN. Positions 248, 260, and 262 each coordinate Mg(2+). Mn(2+)-binding residues include Asp-248, Glu-260, and Asn-262.

It belongs to the RimK family. Requires Mg(2+) as cofactor. It depends on Mn(2+) as a cofactor.

This chain is Probable alpha-L-glutamate ligase, found in Psychromonas ingrahamii (strain DSM 17664 / CCUG 51855 / 37).